We begin with the raw amino-acid sequence, 262 residues long: Ninja-family protein 3 (262 aa).

Residues 48 to 69 (RRNSLTCNTSKEAAGQSPEEMN) form a disordered region.

It belongs to the Ninja family.

The protein localises to the nucleus. The protein is Ninja-family protein 3 of Zea mays (Maize).